The following is a 261-amino-acid chain: Putative outer membrane protein CT_371 (261 aa).

Positions Met-1–Ala-18 are cleaved as a signal peptide.

It localises to the cell outer membrane. In Chlamydia trachomatis serovar D (strain ATCC VR-885 / DSM 19411 / UW-3/Cx), this protein is Putative outer membrane protein CT_371.